The sequence spans 367 residues: Cellular tumor antigen p53 (367 aa).

The transcription activation (acidic) stretch occupies residues 1–47 (MEEENISLPLSQDTFQDLWDNVSAPPISTIQTAALENEAWPAERQMN). A DNA-binding region spans residues 86–273 (DYPGEYGFKL…KTEETNSTKM (188 aa)). Zn(2+) is bound by residues cysteine 160, histidine 163, cysteine 219, and cysteine 223. Positions 254 to 261 (RVCACPGR) are interaction with DNA. Over residues 262–279 (DRKTEETNSTKMQNDAKD) the composition is skewed to basic and acidic residues. 2 disordered regions span residues 262–306 (DRKT…AEED) and 332–367 (DLLE…SDSD). The Bipartite nuclear localization signal signature appears at 282 to 300 (KRKSVPTPDSTTIKKSKTA). Low complexity predominate over residues 291–302 (STTIKKSKTASS). Residues 308–337 (NEVYTLQIRGRKRYEMLKKINDGLDLLENK) are oligomerization. The Nuclear export signal signature appears at 322 to 333 (EMLKKINDGLDL). The tract at residues 342 to 363 (ATHRPDGPIPPSGKRLLHRGEK) is basic (repression of DNA-binding).

This sequence belongs to the p53 family. In terms of assembly, binds DNA as a homotetramer. Requires Zn(2+) as cofactor.

It localises to the cytoplasm. It is found in the nucleus. In terms of biological role, multifunctional transcription factor that induces cell cycle arrest, DNA repair or apoptosis upon binding to its target DNA sequence. Acts as a tumor suppressor in many tumor types; induces growth arrest or apoptosis depending on the physiological circumstances and cell type. Negatively regulates cell division by controlling expression of a set of genes required for this process. One of the activated genes is an inhibitor of cyclin-dependent kinases. Apoptosis induction seems to be mediated either by stimulation of BAX and FAS antigen expression, or by repression of Bcl-2 expression. This is Cellular tumor antigen p53 (tp53) from Tetraodon miurus (Congo puffer).